Reading from the N-terminus, the 73-residue chain is Large ribosomal subunit protein bL31 (73 aa).

This sequence belongs to the bacterial ribosomal protein bL31 family. Type A subfamily. Part of the 50S ribosomal subunit.

Functionally, binds the 23S rRNA. This chain is Large ribosomal subunit protein bL31, found in Bartonella henselae (strain ATCC 49882 / DSM 28221 / CCUG 30454 / Houston 1) (Rochalimaea henselae).